The primary structure comprises 352 residues: Ketoisovalerate oxidoreductase subunit VorB (352 aa).

Heterotrimer of the VorA, VorB and VorC subunits.

The enzyme catalyses 3-methyl-2-oxobutanoate + 2 oxidized [2Fe-2S]-[ferredoxin] + CoA = 2-methylpropanoyl-CoA + 2 reduced [2Fe-2S]-[ferredoxin] + CO2 + H(+). In Methanothermobacter marburgensis (strain ATCC BAA-927 / DSM 2133 / JCM 14651 / NBRC 100331 / OCM 82 / Marburg) (Methanobacterium thermoautotrophicum), this protein is Ketoisovalerate oxidoreductase subunit VorB (vorB).